Consider the following 310-residue polypeptide: Putative S-adenosyl-L-methionine-dependent methyltransferase MMAR_0357 (310 aa).

S-adenosyl-L-methionine-binding positions include Asp132 and 161 to 162 (DL).

The protein belongs to the UPF0677 family.

Its function is as follows. Exhibits S-adenosyl-L-methionine-dependent methyltransferase activity. This Mycobacterium marinum (strain ATCC BAA-535 / M) protein is Putative S-adenosyl-L-methionine-dependent methyltransferase MMAR_0357.